We begin with the raw amino-acid sequence, 416 residues long: Enterobactin exporter EntS (416 aa).

The Cytoplasmic portion of the chain corresponds to 1–21; sequence MNKQSWLLNLSLLKTHPAFRA. The chain crosses the membrane as a helical span at residues 22 to 42; sequence VFLARFISIVSLGLLGVAVPV. Residues 43–55 are Periplasmic-facing; that stretch reads QIQMMTHSTWQVG. Residues 56–76 form a helical membrane-spanning segment; it reads LSVTLTGGAMFVGLMVGGVLA. The Cytoplasmic segment spans residues 77-83; that stretch reads DRYERKK. Residues 84 to 104 traverse the membrane as a helical segment; it reads VILLARGTCGIGFIGLCLNAL. The Periplasmic portion of the chain corresponds to 105-109; that stretch reads LPEPS. A helical membrane pass occupies residues 110–130; that stretch reads LLAIYLLGLWDGFFASLGVTA. At 131 to 156 the chain is on the cytoplasmic side; it reads LLAATPALVGRENLMQAGAITMLTVR. The helical transmembrane segment at 157-177 threads the bilayer; sequence LGSVISPMIGGLLLATGGVAW. Residue asparagine 178 is a topological domain, periplasmic. The chain crosses the membrane as a helical span at residues 179–199; it reads YGLAAAGTFITLLPLLSLPAL. Over 200–218 the chain is Cytoplasmic; the sequence is PPPPQPREHPLKSLLAGFR. The helical transmembrane segment at 219–239 threads the bilayer; that stretch reads FLLASPLVGGIALLGGLLTMA. At 240-256 the chain is on the periplasmic side; it reads SAVRVLYPALADNWQMS. The chain crosses the membrane as a helical span at residues 257-277; that stretch reads AAQIGFLYAAIPLGAAIGALT. Over 278 to 287 the chain is Cytoplasmic; sequence SGKLAHSARP. The chain crosses the membrane as a helical span at residues 288 to 307; sequence GLLMLLSTLGSFLAIGLFGL. Residues 308–313 lie on the Periplasmic side of the membrane; it reads MPMWIL. A helical transmembrane segment spans residues 314–336; sequence GVVCLALFGWLSAVSSLLQYTML. Residues 337–356 are Cytoplasmic-facing; it reads QTQTPEAMLGRINGLWTAQN. A helical transmembrane segment spans residues 357-377; it reads VTGDAIGAALLGGLGAMMTPV. Residue alanine 378 is a topological domain, periplasmic. Residues 379–399 form a helical membrane-spanning segment; the sequence is SASASGFGLLIIGVLLLLVLV. The Cytoplasmic portion of the chain corresponds to 400–416; that stretch reads ELRRFRQTPPQMTASDS.

It belongs to the major facilitator superfamily. EntS (TC 2.A.1.38) family.

The protein localises to the cell inner membrane. Component of an export pathway for enterobactin. The polypeptide is Enterobactin exporter EntS (Escherichia coli O7:K1 (strain IAI39 / ExPEC)).